Here is a 527-residue protein sequence, read N- to C-terminus: UPF0053 protein YegH (527 aa).

7 consecutive transmembrane segments (helical) span residues 14–34, 51–71, 81–101, 122–142, 145–165, 185–205, and 207–227; these read ITLI…IAIL, LLLA…LVTL, FTFS…LFKA, GAKF…FSLD, ITAV…VIAI, IVIL…AEGF, and FVIP…IEAL. CBS domains are found at residues 306-366 and 371-429; these read MTSR…GEPL and LIRQ…PNEV.

Belongs to the UPF0053 family.

The protein resides in the cell membrane. In Shigella flexneri, this protein is UPF0053 protein YegH (yegH).